The primary structure comprises 271 residues: Formamidopyrimidine-DNA glycosylase (271 aa).

Pro-2 serves as the catalytic Schiff-base intermediate with DNA. Glu-3 serves as the catalytic Proton donor. Lys-58 acts as the Proton donor; for beta-elimination activity in catalysis. Positions 91, 110, and 152 each coordinate DNA. An FPG-type zinc finger spans residues 237 to 271 (QIYGRSAHPCPICGTPIRLERIGQRASYYCTQCQH). Arg-261 serves as the catalytic Proton donor; for delta-elimination activity.

It belongs to the FPG family. As to quaternary structure, monomer. Requires Zn(2+) as cofactor.

The catalysed reaction is Hydrolysis of DNA containing ring-opened 7-methylguanine residues, releasing 2,6-diamino-4-hydroxy-5-(N-methyl)formamidopyrimidine.. It catalyses the reaction 2'-deoxyribonucleotide-(2'-deoxyribose 5'-phosphate)-2'-deoxyribonucleotide-DNA = a 3'-end 2'-deoxyribonucleotide-(2,3-dehydro-2,3-deoxyribose 5'-phosphate)-DNA + a 5'-end 5'-phospho-2'-deoxyribonucleoside-DNA + H(+). Involved in base excision repair of DNA damaged by oxidation or by mutagenic agents. Acts as a DNA glycosylase that recognizes and removes damaged bases. Has a preference for oxidized purines, such as 7,8-dihydro-8-oxoguanine (8-oxoG). Has AP (apurinic/apyrimidinic) lyase activity and introduces nicks in the DNA strand. Cleaves the DNA backbone by beta-delta elimination to generate a single-strand break at the site of the removed base with both 3'- and 5'-phosphates. The sequence is that of Formamidopyrimidine-DNA glycosylase from Nitrosococcus oceani (strain ATCC 19707 / BCRC 17464 / JCM 30415 / NCIMB 11848 / C-107).